The sequence spans 145 residues: Peptide methionine sulfoxide reductase MsrB (145 aa).

A MsrB domain is found at 6 to 129 (KNERLQQLTD…NSAALRFIPV (124 aa)). Residue C118 is the Nucleophile of the active site.

This sequence belongs to the MsrB Met sulfoxide reductase family.

It carries out the reaction L-methionyl-[protein] + [thioredoxin]-disulfide + H2O = L-methionyl-(R)-S-oxide-[protein] + [thioredoxin]-dithiol. In Listeria monocytogenes serotype 4b (strain CLIP80459), this protein is Peptide methionine sulfoxide reductase MsrB.